Consider the following 572-residue polypeptide: Urease subunit alpha (572 aa).

The 439-residue stretch at 134–572 (AGIDTHIHLI…AAMNQLYFFG (439 aa)) folds into the Urease domain. Ni(2+) is bound by residues H139, H141, and K222. K222 carries the post-translational modification N6-carboxylysine. H224 provides a ligand contact to substrate. Ni(2+) contacts are provided by H251 and H277. H325 acts as the Proton donor in catalysis. Position 365 (D365) interacts with Ni(2+).

This sequence belongs to the metallo-dependent hydrolases superfamily. Urease alpha subunit family. As to quaternary structure, heterotrimer of UreA (gamma), UreB (beta) and UreC (alpha) subunits. Three heterotrimers associate to form the active enzyme. Ni cation serves as cofactor. Carboxylation allows a single lysine to coordinate two nickel ions.

Its subcellular location is the cytoplasm. It carries out the reaction urea + 2 H2O + H(+) = hydrogencarbonate + 2 NH4(+). It participates in nitrogen metabolism; urea degradation; CO(2) and NH(3) from urea (urease route): step 1/1. This chain is Urease subunit alpha, found in Edwardsiella ictaluri (strain 93-146).